Reading from the N-terminus, the 151-residue chain is Gene 55 protein (151 aa).

This chain is Gene 55 protein (55), found in Mycobacterium phage D29 (Mycobacteriophage D29).